We begin with the raw amino-acid sequence, 583 residues long: Aspartate--tRNA ligase (583 aa).

Glutamate 174 serves as a coordination point for L-aspartate. Residues 198-201 form an aspartate region; that stretch reads QTFK. Position 220 (arginine 220) interacts with L-aspartate. Residues 220–222 and glutamine 229 each bind ATP; that span reads RDE. Histidine 445 serves as a coordination point for L-aspartate. Glutamate 479 contacts ATP. Residue arginine 486 participates in L-aspartate binding. Residue 531-534 participates in ATP binding; the sequence is GLDR.

It belongs to the class-II aminoacyl-tRNA synthetase family. Type 1 subfamily. In terms of assembly, homodimer.

The protein resides in the cytoplasm. The enzyme catalyses tRNA(Asp) + L-aspartate + ATP = L-aspartyl-tRNA(Asp) + AMP + diphosphate. In terms of biological role, catalyzes the attachment of L-aspartate to tRNA(Asp) in a two-step reaction: L-aspartate is first activated by ATP to form Asp-AMP and then transferred to the acceptor end of tRNA(Asp). This is Aspartate--tRNA ligase from Flavobacterium psychrophilum (strain ATCC 49511 / DSM 21280 / CIP 103535 / JIP02/86).